Reading from the N-terminus, the 318-residue chain is Methionyl-tRNA formyltransferase (318 aa).

112-115 (SILP) is a (6S)-5,6,7,8-tetrahydrofolate binding site.

Belongs to the Fmt family.

The catalysed reaction is L-methionyl-tRNA(fMet) + (6R)-10-formyltetrahydrofolate = N-formyl-L-methionyl-tRNA(fMet) + (6S)-5,6,7,8-tetrahydrofolate + H(+). Functionally, attaches a formyl group to the free amino group of methionyl-tRNA(fMet). The formyl group appears to play a dual role in the initiator identity of N-formylmethionyl-tRNA by promoting its recognition by IF2 and preventing the misappropriation of this tRNA by the elongation apparatus. This is Methionyl-tRNA formyltransferase from Haemophilus influenzae (strain ATCC 51907 / DSM 11121 / KW20 / Rd).